Consider the following 149-residue polypeptide: Large ribosomal subunit protein uL13 (149 aa).

This sequence belongs to the universal ribosomal protein uL13 family. As to quaternary structure, part of the 50S ribosomal subunit.

In terms of biological role, this protein is one of the early assembly proteins of the 50S ribosomal subunit, although it is not seen to bind rRNA by itself. It is important during the early stages of 50S assembly. This chain is Large ribosomal subunit protein uL13, found in Chlorobium chlorochromatii (strain CaD3).